We begin with the raw amino-acid sequence, 897 residues long: Probable bifunctional chitinase/lysozyme (897 aa).

The N-terminal stretch at 1–24 (MKLNIFTKSMIGMGLVCSALPALA) is a signal peptide. The region spanning 25-91 (MEAWNNQQGG…SQFGNTLSCE (67 aa)) is the Chitin-binding type-3 1 domain. 3 disordered regions span residues 90 to 127 (CEKS…SNSS), 182 to 222 (TEIS…PADK), and 287 to 333 (QYGN…DSVN). The span at 95–111 (SSSSSNSNTPASNTPAN) shows a compositional bias: low complexity. 2 stretches are compositionally biased toward polar residues: residues 113-127 (GSAT…SNSS) and 182-197 (TEIS…TSAP). Residues 128–194 (VVAWNKQQGG…SETSNPQSCT (67 aa)) enclose the Chitin-binding type-3 2 domain. Residues 198-216 (QPSPDVKPAPDVKPAPDVQ) show a composition bias toward pro residues. A Chitin-binding type-3 3 domain is found at 229 to 295 (VVAWKGQEGS…SQYGNPGSCS (67 aa)). The segment covering 309-318 (DPTPETPVTP) has biased composition (pro residues). The segment covering 322-333 (NSEPSTPADSVN) has biased composition (polar residues). Chitin-binding type-3 domains follow at residues 337 to 403 (LQAW…TTCE) and 459 to 529 (AKAW…PQFN). The GH18 domain occupies 586–877 (KHVYAPYVDF…TNLSPEFHGL (292 aa)). A disulfide bridge links Cys628 with Cys673. Glu700 acts as the Proton donor in catalysis.

It belongs to the glycosyl hydrolase 18 family. Chitinase class II subfamily.

The protein localises to the periplasm. The catalysed reaction is Random endo-hydrolysis of N-acetyl-beta-D-glucosaminide (1-&gt;4)-beta-linkages in chitin and chitodextrins.. It carries out the reaction Hydrolysis of (1-&gt;4)-beta-linkages between N-acetylmuramic acid and N-acetyl-D-glucosamine residues in a peptidoglycan and between N-acetyl-D-glucosamine residues in chitodextrins.. Its function is as follows. Bifunctional enzyme with lysozyme/chitinase activity. The protein is Probable bifunctional chitinase/lysozyme (chiA) of Escherichia coli (strain K12).